The primary structure comprises 557 residues: Membrane protein insertase YidC (557 aa).

Residues 1–21 traverse the membrane as a helical segment; that stretch reads MNWLRNSLIAAILVITYVLFI. The tract at residues 52-71 is disordered; sequence SDDAVASSATEESDVPEVSV. 5 helical membrane-spanning segments follow: residues 346 to 366, 369 to 389, 439 to 459, 470 to 490, and 517 to 537; these read TIDYSFLWFIAKPLFFALDFI, LVGNWGVAIILLTVLIKAVFF, FGGCLPILLQMPVFISLYWMI, FFLWIQDLSVKDPLFILPLLM, and PIGFTFLFMFFPAGLVLYWVV.

The protein belongs to the OXA1/ALB3/YidC family. Type 1 subfamily. As to quaternary structure, interacts with the Sec translocase complex via SecD. Specifically interacts with transmembrane segments of nascent integral membrane proteins during membrane integration.

Its subcellular location is the cell inner membrane. Its function is as follows. Required for the insertion and/or proper folding and/or complex formation of integral membrane proteins into the membrane. Involved in integration of membrane proteins that insert both dependently and independently of the Sec translocase complex, as well as at least some lipoproteins. Aids folding of multispanning membrane proteins. The protein is Membrane protein insertase YidC of Saccharophagus degradans (strain 2-40 / ATCC 43961 / DSM 17024).